The primary structure comprises 273 residues: NADPH-dependent 7-cyano-7-deazaguanine reductase (273 aa).

81–83 (VES) contributes to the substrate binding site. 83–84 (SK) contacts NADPH. Catalysis depends on Cys179, which acts as the Thioimide intermediate. Asp186 serves as the catalytic Proton donor. 218–219 (AE) lines the substrate pocket. 247–248 (RG) is a binding site for NADPH.

Belongs to the GTP cyclohydrolase I family. QueF type 2 subfamily. In terms of assembly, homodimer.

The protein resides in the cytoplasm. It carries out the reaction 7-aminomethyl-7-carbaguanine + 2 NADP(+) = 7-cyano-7-deazaguanine + 2 NADPH + 3 H(+). It functions in the pathway tRNA modification; tRNA-queuosine biosynthesis. Its function is as follows. Catalyzes the NADPH-dependent reduction of 7-cyano-7-deazaguanine (preQ0) to 7-aminomethyl-7-deazaguanine (preQ1). The protein is NADPH-dependent 7-cyano-7-deazaguanine reductase of Rickettsia massiliae (strain Mtu5).